The primary structure comprises 185 residues: Ribosome-recycling factor (185 aa).

This sequence belongs to the RRF family.

It localises to the cytoplasm. Its function is as follows. Responsible for the release of ribosomes from messenger RNA at the termination of protein biosynthesis. May increase the efficiency of translation by recycling ribosomes from one round of translation to another. The polypeptide is Ribosome-recycling factor (Wigglesworthia glossinidia brevipalpis).